Reading from the N-terminus, the 233-residue chain is Ubiquitin carboxyl-terminal hydrolase isozyme L4 (233 aa).

The UCH catalytic domain maps to 5–232; that stretch reads RWLPLEANPE…LRFNAIALSA (228 aa). Residues 8-13 are interaction with ubiquitin; it reads PLEANP. Cysteine 95 functions as the Nucleophile in the catalytic mechanism. Phosphoserine is present on serine 133. The active-site Proton donor is histidine 172. The interaction with ubiquitin stretch occupies residues 222 to 227; the sequence is ELRFNA.

This sequence belongs to the peptidase C12 family. In terms of tissue distribution, expressed in various tissues at low level.

It is found in the cytoplasm. It carries out the reaction Thiol-dependent hydrolysis of ester, thioester, amide, peptide and isopeptide bonds formed by the C-terminal Gly of ubiquitin (a 76-residue protein attached to proteins as an intracellular targeting signal).. Ubiquitin-protein hydrolase is involved both in the processing of ubiquitin precursors and of ubiquitinated proteins. This enzyme is a thiol protease that recognizes and hydrolyzes a peptide bond at the C-terminal glycine of ubiquitin. In Mus musculus (Mouse), this protein is Ubiquitin carboxyl-terminal hydrolase isozyme L4 (Uchl4).